The primary structure comprises 1040 residues: Multidrug resistance protein MdtB (1040 aa).

Helical transmembrane passes span 25 to 45 (LLMA…PVAA), 347 to 367 (LMLA…NIPA), 369 to 389 (IIPG…MVFL), 396 to 416 (LTLM…IVVI), 440 to 460 (IGFT…PLLF), 472 to 492 (FAVT…TLTP), 537 to 557 (WLTL…WIVI), 863 to 883 (LGST…VLGV), 888 to 908 (FIHP…ALLA), 910 to 930 (IIAG…LIGI), 968 to 988 (ILMT…STGV), and 998 to 1018 (IAMV…TPVI).

This sequence belongs to the resistance-nodulation-cell division (RND) (TC 2.A.6) family. MdtB subfamily. In terms of assembly, part of a tripartite efflux system composed of MdtA, MdtB and MdtC. MdtB forms a heteromultimer with MdtC.

The protein localises to the cell inner membrane. This Salmonella choleraesuis (strain SC-B67) protein is Multidrug resistance protein MdtB.